Here is a 350-residue protein sequence, read N- to C-terminus: tRNA N6-adenosine threonylcarbamoyltransferase (350 aa).

The Fe cation site is built by His-115 and His-119. Substrate contacts are provided by residues 137 to 141 (IISGG), Asp-170, Gly-183, and Asn-281. Asp-309 lines the Fe cation pocket.

The protein belongs to the KAE1 / TsaD family. The cofactor is Fe(2+).

Its subcellular location is the cytoplasm. The enzyme catalyses L-threonylcarbamoyladenylate + adenosine(37) in tRNA = N(6)-L-threonylcarbamoyladenosine(37) in tRNA + AMP + H(+). Functionally, required for the formation of a threonylcarbamoyl group on adenosine at position 37 (t(6)A37) in tRNAs that read codons beginning with adenine. Is involved in the transfer of the threonylcarbamoyl moiety of threonylcarbamoyl-AMP (TC-AMP) to the N6 group of A37, together with TsaE and TsaB. TsaD likely plays a direct catalytic role in this reaction. This is tRNA N6-adenosine threonylcarbamoyltransferase from Ehrlichia canis (strain Jake).